A 265-amino-acid chain; its full sequence is GTP cyclohydrolase FolE2 (265 aa).

Belongs to the GTP cyclohydrolase IV family.

It carries out the reaction GTP + H2O = 7,8-dihydroneopterin 3'-triphosphate + formate + H(+). The protein operates within cofactor biosynthesis; 7,8-dihydroneopterin triphosphate biosynthesis; 7,8-dihydroneopterin triphosphate from GTP: step 1/1. Converts GTP to 7,8-dihydroneopterin triphosphate. This Bordetella bronchiseptica (strain ATCC BAA-588 / NCTC 13252 / RB50) (Alcaligenes bronchisepticus) protein is GTP cyclohydrolase FolE2.